The following is a 258-amino-acid chain: 6-carboxyhexanoate--CoA ligase (258 aa).

The protein belongs to the BioW family. As to quaternary structure, homodimer. Requires Mg(2+) as cofactor.

The catalysed reaction is heptanedioate + ATP + CoA = 6-carboxyhexanoyl-CoA + AMP + diphosphate. It participates in metabolic intermediate metabolism; pimeloyl-CoA biosynthesis; pimeloyl-CoA from pimelate: step 1/1. Its function is as follows. Catalyzes the transformation of pimelate into pimeloyl-CoA with concomitant hydrolysis of ATP to AMP. This chain is 6-carboxyhexanoate--CoA ligase, found in Bacillus spizizenii (strain ATCC 23059 / NRRL B-14472 / W23) (Bacillus subtilis subsp. spizizenii).